A 106-amino-acid polypeptide reads, in one-letter code: uncharacterized protein (106 aa).

Belongs to the HesB/IscA family.

This is an uncharacterized protein from Rhodobacter capsulatus (Rhodopseudomonas capsulata).